Consider the following 829-residue polypeptide: MSASSSGGSPRFPSCGKNGVTSLTQKKVLRAPCGAPSVTVTKSHKRGMKGDTVNVRRSVRVKTKVPWMPPGKSSARPVGCKWENPPHCLEITPPSSEKLVSVMRLSDLSTEDDDSGHCKMNRYDKKIDSLMNAVGCLKSEVKMQKGERQMAKRFLEERKEELEEVAHELAETEHENTVLRHNIERMKEEKDFTILQKKHLQQEKECLMSKLVEAEMDGAAAAKQVMALKDTIGKLKTEKQMTCTDINTLTRQKELLLQKLSTFEETNRTLRDLLREQHCKEDSERLMEQQGALLKRLAEADSEKARLLLLLQDKDKEVEELLQEIQCEKAQAKTASELSKSMESMRGHLQAQLRSKEAENSRLCMQIKNLERSGNQHKAEVEAIMEQLKELKQKGDRDKESLKKAIRAQKERAEKSEEYAEQLHVQLADKDLYVAEALSTLESWRSRYNQVVKEKGDLELEIIVLNDRVTDLVNQQQTLEEKMREDRDSLVERLHRQTAEYSAFKLENERLKASFAPMEDKLNQAHLEVQQLKASVKNYEGMIDNYKSQVMKTRLEADEVAAQLERCDKENKILKDEMNKEIEAARRQFQSQLADLQQLPDILKITEAKLAECQDQLQGYERKNIDLTAIISDLRSRIEHQGDKLEMAREKHQASQKENKQLSLKVDELERKLEATSAQNIEFLQVIAKREEAIHQSQLRLEEKTRECGTLARQLESAIEDARRQVEQTKEHALSKERAAQNKILDLETQLSRTKTELSQLRRSRDDADRRYQSRLQDLKDRLEQSESTNRSMQNYVQFLKSSYANVFGDGPYSTFLTSSPIRSRSPPA.

Residues S73 and S74 each carry the phosphoserine modification. Residue T92 is modified to Phosphothreonine. At S95 the chain carries Phosphoserine; by TSSK4. Phosphoserine occurs at positions 106 and 109. T110 is subject to Phosphothreonine. 2 positions are modified to phosphoserine: S115 and S129. Residue K138 forms a Glycyl lysine isopeptide (Lys-Gly) (interchain with G-Cter in SUMO2) linkage. Position 139 is a phosphoserine (S139). Residues 144–217 are a coiled coil; it reads QKGERQMAKR…MSKLVEAEMD (74 aa). T231 bears the Phosphothreonine mark. Coiled coils occupy residues 245–423 and 461–798; these read DINT…AEQL and EIIV…NYVQ. Position 261 is a phosphoserine (S261). Residues 392–413 form a disordered region; it reads KQKGDRDKESLKKAIRAQKERA. The interval 537–701 is interaction with BBOF1; it reads KNYEGMIDNY…EAIHQSQLRL (165 aa). Phosphoserine is present on S632.

The protein belongs to the ODF2 family. As to quaternary structure, self-associates. Associates with microtubules and forms a fibrillar structure partially linked to the microtubule network. Interacts via its C-terminus with PLK1. Interacts with ODF1. Interacts with MARK4; the interaction is required for localization of ODF2 to centrioles. Interacts with TSSK4. Interacts with AKNA. Interacts with QRICH2. Interacts with CFAP58. Interacts with BBOF1. Interacts with CCDC38. Interacts with CCDC42. In terms of processing, tyrosine phosphorylated. Phosphorylated by TSSK4 on Ser-95. In terms of tissue distribution, testis-specific (at protein level). Highly expressed in cytoplasm of step 2 round spermatids. Detected in the middle piece and extends to about half the principal piece of the sperm tails.

Its subcellular location is the cytoplasm. The protein localises to the cytoskeleton. It localises to the microtubule organizing center. The protein resides in the centrosome. It is found in the cell projection. Its subcellular location is the cilium. The protein localises to the centriole. It localises to the spindle pole. The protein resides in the flagellum. Functionally, seems to be a major component of sperm tail outer dense fibers (ODF). ODFs are filamentous structures located on the outside of the axoneme in the midpiece and principal piece of the mammalian sperm tail and may help to maintain the passive elastic structures and elastic recoil of the sperm tail. May have a modulating influence on sperm motility. Functions as a general scaffold protein that is specifically localized at the distal/subdistal appendages of mother centrioles. Component of the centrosome matrix required for the localization of PLK1 and NIN to the centrosomes. Required for the formation and/or maintenance of normal CETN1 assembly. The sequence is that of Outer dense fiber protein 2 (ODF2) from Homo sapiens (Human).